The following is a 218-amino-acid chain: Serine/threonine-protein phosphatase 1 (218 aa).

Residues aspartate 24, histidine 26, aspartate 53, and asparagine 79 each contribute to the Mn(2+) site. Residue histidine 80 is the Proton donor of the active site. Position 187 (histidine 187) interacts with Mn(2+).

This sequence belongs to the PPP phosphatase family. PP-1 subfamily. It depends on Mn(2+) as a cofactor.

It catalyses the reaction O-phospho-L-seryl-[protein] + H2O = L-seryl-[protein] + phosphate. The enzyme catalyses O-phospho-L-threonyl-[protein] + H2O = L-threonyl-[protein] + phosphate. In terms of biological role, plays a key role in signaling protein misfolding via the CpxR/CPXA transducing system. It also modulates the phosphorylated status of many phosphoproteins in E.coli, some of which acting as major chaperones. Has been shown, in vitro, to act on Ser, Thr and Tyr-phosphorylated substrates. The protein is Serine/threonine-protein phosphatase 1 (pphA) of Escherichia coli (strain K12).